The primary structure comprises 156 residues: ATP synthase subunit b (156 aa).

The chain crosses the membrane as a helical span at residues 13–33 (AFIIFVWCCMKFVWPPLMAAI).

It belongs to the ATPase B chain family. In terms of assembly, F-type ATPases have 2 components, F(1) - the catalytic core - and F(0) - the membrane proton channel. F(1) has five subunits: alpha(3), beta(3), gamma(1), delta(1), epsilon(1). F(0) has three main subunits: a(1), b(2) and c(10-14). The alpha and beta chains form an alternating ring which encloses part of the gamma chain. F(1) is attached to F(0) by a central stalk formed by the gamma and epsilon chains, while a peripheral stalk is formed by the delta and b chains.

The protein resides in the cell inner membrane. Functionally, f(1)F(0) ATP synthase produces ATP from ADP in the presence of a proton or sodium gradient. F-type ATPases consist of two structural domains, F(1) containing the extramembraneous catalytic core and F(0) containing the membrane proton channel, linked together by a central stalk and a peripheral stalk. During catalysis, ATP synthesis in the catalytic domain of F(1) is coupled via a rotary mechanism of the central stalk subunits to proton translocation. In terms of biological role, component of the F(0) channel, it forms part of the peripheral stalk, linking F(1) to F(0). This Aeromonas salmonicida (strain A449) protein is ATP synthase subunit b.